We begin with the raw amino-acid sequence, 366 residues long: Histidinol-phosphate aminotransferase (366 aa).

Lysine 228 is modified (N6-(pyridoxal phosphate)lysine).

The protein belongs to the class-II pyridoxal-phosphate-dependent aminotransferase family. Histidinol-phosphate aminotransferase subfamily. Homodimer. Pyridoxal 5'-phosphate is required as a cofactor.

It catalyses the reaction L-histidinol phosphate + 2-oxoglutarate = 3-(imidazol-4-yl)-2-oxopropyl phosphate + L-glutamate. Its pathway is amino-acid biosynthesis; L-histidine biosynthesis; L-histidine from 5-phospho-alpha-D-ribose 1-diphosphate: step 7/9. This Corynebacterium diphtheriae (strain ATCC 700971 / NCTC 13129 / Biotype gravis) protein is Histidinol-phosphate aminotransferase.